The sequence spans 188 residues: Preprocaerulein type-1 (188 aa).

An N-terminal signal peptide occupies residues 1–26 (MFKGILLCVLFAVLSANPLSQPEGFA). Positions 27–170 (DEERDVRGLA…ANDERRFADG (144 aa)) are excised as a propeptide. The segment at 152–188 (LGGSPQQREANDERRFADGQQDYTGWMDFGRRNGEDD) is disordered. Tyr-174 bears the Sulfotyrosine mark. The residue at position 180 (Phe-180) is a Phenylalanine amide. The propeptide occupies 184-188 (NGEDD).

It belongs to the gastrin/cholecystokinin family. As to expression, expressed by the skin glands.

It localises to the secreted. The pharmacological activities of caerulein are quite similar to the physiological activities of gastrin and related peptides. This is Preprocaerulein type-1 from Xenopus laevis (African clawed frog).